The following is a 248-amino-acid chain: MLYLHDVWVNWFEGEENGYNVCHFYEWRKDDTIELLDQVPLLKVDSTLYHYIENELLELPQKLLEDVHHKAYIRKNHERLQQEYCFVVTDGKGIIAIDTIGYNVPIRKSRLIPRQEQMVYEMVENVQAEKYEFQVEEMEKEHHILSPSPFVMNGLTRKERQLKQLLFMALDQLHTTKNTAEIRYWFTEWDPSAYGMVQHMEFEDIWAKLYDEAKTGWSEKHEQLCERLVKGQPFFEKLWEMENEQKVN.

It belongs to the UPF0736 family.

The sequence is that of UPF0736 protein BT9727_1080 from Bacillus thuringiensis subsp. konkukian (strain 97-27).